Here is a 194-residue protein sequence, read N- to C-terminus: uncharacterized protein (194 aa).

This sequence belongs to the mimivirus R457/R459 family.

It localises to the virion. This is an uncharacterized protein from Acanthamoeba polyphaga mimivirus (APMV).